We begin with the raw amino-acid sequence, 551 residues long: Calnexin homolog (551 aa).

Residues 1–26 form the signal peptide; it reads MVDRKEIPLAMGLLAVLLFFVASSSS. The Lumenal portion of the chain corresponds to 27-480; the sequence is FHLVRASDEV…EKGEKQPNLT (454 aa). Ca(2+) contacts are provided by Ser44 and Asp75. The cysteines at positions 118 and 153 are disulfide-linked. An alpha-D-glucoside is bound by residues Tyr122 and Lys124. A glycan (N-linked (GlcNAc...) asparagine) is linked at Asn140. 2 residues coordinate an alpha-D-glucoside: Tyr144 and Asp151. The interval 226–330 is disordered; sequence ALIPSKTIPD…CGEWKRPTKS (105 aa). The tract at residues 233 to 364 is p domain (Extended arm); that stretch reads IPDPDDKKPE…QEIPNPEYFE (132 aa). 2 stretches are compositionally biased toward basic and acidic residues: residues 234-269 and 276-295; these read PDPD…PREI and KPEP…AKPE. Tandem repeats lie at residues 235–246, 252–263, 271–282, 289–299, and 303–313. 4 X approximate repeats regions lie at residues 235–299 and 303–360; these read DPDD…DWDD and GEWE…IPNP. The span at 296–305 shows a compositional bias: acidic residues; sequence DWDDEEDGEW. Cys315 and Cys321 are joined by a disulfide. Tandem repeats lie at residues 322–332, 336–346, and 350–360. Glu379 provides a ligand contact to an alpha-D-glucoside. Asp390 is a binding site for Ca(2+). Asn478 carries N-linked (GlcNAc...) asparagine glycosylation. A helical transmembrane segment spans residues 481 to 501; the sequence is IGIIVSVVIVFVSIFFRLIFG. The Cytoplasmic segment spans residues 502–551; it reads GKKPANVEANVEKKKTNTETTSKQDGGEKEDNKEKEETANPPRRRPKRDN. Residues 510-551 are disordered; the sequence is ANVEKKKTNTETTSKQDGGEKEDNKEKEETANPPRRRPKRDN. Residues 526-539 show a composition bias toward basic and acidic residues; that stretch reads DGGEKEDNKEKEET.

The protein belongs to the calreticulin family. As to expression, in vegetative and flowering tissues.

The protein localises to the endoplasmic reticulum membrane. Functionally, calcium-binding protein that interacts with newly synthesized monoglucosylated glycoproteins in the endoplasmic reticulum. It may act in assisting protein assembly and/or in the retention within the ER of unassembled protein subunits. It seems to play a major role in the quality control apparatus of the ER by the retention of incorrectly folded proteins. The chain is Calnexin homolog from Pisum sativum (Garden pea).